The chain runs to 145 residues: Peptide methionine sulfoxide reductase MsrB (145 aa).

Residues 4-127 (SDELKQRIGD…NSAALKFIPY (124 aa)) form the MsrB domain. Residue C116 is the Nucleophile of the active site.

This sequence belongs to the MsrB Met sulfoxide reductase family.

The catalysed reaction is L-methionyl-[protein] + [thioredoxin]-disulfide + H2O = L-methionyl-(R)-S-oxide-[protein] + [thioredoxin]-dithiol. This Streptococcus pyogenes serotype M18 (strain MGAS8232) protein is Peptide methionine sulfoxide reductase MsrB.